The following is a 98-amino-acid chain: Sm-like protein LSM3B (98 aa).

An N-acetylserine modification is found at Ser-2. The Sm domain occupies 11–96 (EPLDLIRLSL…VILVSPPLRT (86 aa)).

This sequence belongs to the snRNP Sm proteins family. Component of the heptameric LSM1-LSM7 complex that forms a seven-membered ring structure with a donut shape. The LSM subunits are arranged in the order LSM1, LSM2, LSM3, LSM6, LSM5, LSM7 and LSM4. Component of the heptameric LSM2-LSM8 complex that forms a seven-membered ring structure with a donut shape. The LSM subunits are arranged in the order LSM8, LSM2, LSM3, LSM6, LSM5, LSM7 and LSM4. LSM3B subunit interacts only with its two neighboring subunits, LSM2 and LSM6A or LSM6B. Expressed in roots, leaves, stems, flowers and siliques.

Its subcellular location is the cytoplasm. The protein localises to the nucleus. Component of LSM protein complexes, which are involved in RNA processing. Component of the cytoplasmic LSM1-LSM7 complex which is involved in mRNA degradation by promoting decapping and leading to accurate 5'-3' mRNA decay. The cytoplasmic LSM1-LSM7 complex regulates developmental gene expression by the decapping of specific development-related transcripts. Component of the nuclear LSM2-LSM8 complex which is involved splicing nuclear mRNAs. LSM2-LSM8 binds directly to the U6 small nuclear RNAs (snRNAs) and is essential for accurate splicing of selected development-related mRNAs through the stabilization of the spliceosomal U6 snRNA. Plays a critical role in the regulation of development-related gene expression. The polypeptide is Sm-like protein LSM3B (Arabidopsis thaliana (Mouse-ear cress)).